Here is a 121-residue protein sequence, read N- to C-terminus: Cell division protein FtsB (121 aa).

Residues 1 to 6 lie on the Cytoplasmic side of the membrane; sequence MRNWRW. A helical membrane pass occupies residues 7 to 24; it reads LLLVLAVLLAWLQYRFWF. At 25-121 the chain is on the periplasmic side; that stretch reads GPGNSGEVMM…PASTDPVDHP (97 aa). Residues 31–66 adopt a coiled-coil conformation; it reads EVMMLEAQVAHQTQDNEGLRQRNQALAAEVKDLKDG. A disordered region spans residues 94 to 121; the sequence is APLPAPASPETAAPAQQAPASTDPVDHP. Residues 101–121 show a composition bias toward low complexity; that stretch reads SPETAAPAQQAPASTDPVDHP.

It belongs to the FtsB family. In terms of assembly, part of a complex composed of FtsB, FtsL and FtsQ.

It localises to the cell inner membrane. In terms of biological role, essential cell division protein. May link together the upstream cell division proteins, which are predominantly cytoplasmic, with the downstream cell division proteins, which are predominantly periplasmic. The polypeptide is Cell division protein FtsB (Xanthomonas oryzae pv. oryzae (strain MAFF 311018)).